The chain runs to 210 residues: Probable GTP-binding protein EngB (210 aa).

An EngB-type G domain is found at 25-199 (TGIEVAFAGR…RQKLDTWFSE (175 aa)). GTP is bound by residues 33–40 (GRSNAGKS), 60–64 (GRTQL), 78–81 (DLPG), 145–148 (TKAD), and 178–180 (FSS). Ser-40 and Thr-62 together coordinate Mg(2+).

This sequence belongs to the TRAFAC class TrmE-Era-EngA-EngB-Septin-like GTPase superfamily. EngB GTPase family. It depends on Mg(2+) as a cofactor.

Necessary for normal cell division and for the maintenance of normal septation. The sequence is that of Probable GTP-binding protein EngB from Shigella boydii serotype 4 (strain Sb227).